The following is a 239-amino-acid chain: Bradykinin-potentiating and C-type natriuretic peptides (239 aa).

The first 23 residues, 1 to 23 (MFVSRLAASGLLLLALLAVSLDG), serve as a signal peptide directing secretion. 2 consecutive propeptides follow at residues 24–33 (KPVQQWSHKG) and 43–49 (LVVQQWS). Pyrrolidone carboxylic acid is present on Gln50. Positions 62 to 64 (VVV) are excised as a propeptide. Residue Gln65 is modified to Pyrrolidone carboxylic acid. A propeptide spanning residues 76–82 (LVVQQWS) is cleaved from the precursor. The residue at position 83 (Gln83) is a Pyrrolidone carboxylic acid. Residues 95-97 (LVV) constitute a propeptide that is removed on maturation. Position 98 is a pyrrolidone carboxylic acid (Gln98). 2 propeptides span residues 109-136 (LLKP…AALD) and 148-217 (GSKA…LAKK). Residues 132-205 (EAALDTPPAG…HHAVGGGGGG (74 aa)) form a disordered region. Residues 161 to 171 (SKGASATSAAS) show a composition bias toward low complexity. Basic and acidic residues predominate over residues 173 to 183 (PMRDLRTDGKQ). Cysteines 223 and 239 form a disulfide.

It in the N-terminal section; belongs to the bradykinin-potentiating peptide family. In the central section; belongs to the bradykinin inhibitor peptide family. The protein in the C-terminal section; belongs to the natriuretic peptide family. As to expression, expressed by the venom gland.

The protein localises to the secreted. Bradykinin-potentiating peptides both inhibit the activity of the angiotensin-converting enzyme (ACE) and enhances the action of bradykinin by inhibiting the peptidases that inactivate it. They act as indirect hypotensive agent. Its function is as follows. inhibits angiotensin-converting enzyme (ACE) activity (IC(50)=4.25 uM), preventing the release of angiotensin and thus indirectly contributing to hypotension. In vivo, induce hypotensive response in both normotensive and hypertensive rats. In terms of biological role, antagonizes the vasodilatory actions of bradykinin at the B2 bradykinin receptor (BDKRB2). Functionally, has a vasorelaxant activity in rat aortic strips and a diuretic potency in anesthetized rats. May act by activating natriuretic receptors (NPR1 and/or NPR2). The sequence is that of Bradykinin-potentiating and C-type natriuretic peptides from Lachesis muta muta (Bushmaster).